The sequence spans 134 residues: MTNIRKTNPLLKIINSSFVDLPAPSSLSSWWNFGSLLGVCLGVQILTGLFLAIHYTSDTATAFNSVTHICRDVNYGWLLRYLHANGASMFFICLYLHVGRGLYYGSYTYSETWNIGILLLFAVMATAFMGYVLP.

3 helical membrane-spanning segments follow: residues 33–53, 77–98, and 113–133; these read FGSL…FLAI, WLLR…YLHV, and WNIG…GYVL. Residues histidine 83 and histidine 97 each coordinate heme b.

This sequence belongs to the cytochrome b family. As to quaternary structure, the cytochrome bc1 complex contains 11 subunits: 3 respiratory subunits (MT-CYB, CYC1 and UQCRFS1), 2 core proteins (UQCRC1 and UQCRC2) and 6 low-molecular weight proteins (UQCRH/QCR6, UQCRB/QCR7, UQCRQ/QCR8, UQCR10/QCR9, UQCR11/QCR10 and a cleavage product of UQCRFS1). This cytochrome bc1 complex then forms a dimer. The cofactor is heme b.

Its subcellular location is the mitochondrion inner membrane. In terms of biological role, component of the ubiquinol-cytochrome c reductase complex (complex III or cytochrome b-c1 complex) that is part of the mitochondrial respiratory chain. The b-c1 complex mediates electron transfer from ubiquinol to cytochrome c. Contributes to the generation of a proton gradient across the mitochondrial membrane that is then used for ATP synthesis. This Platyrrhinus helleri (Heller's broad-nosed bat) protein is Cytochrome b (MT-CYB).